The primary structure comprises 119 residues: uncharacterized protein (119 aa).

The protein to Synechocystis PCC 6803 slr0903.

This is an uncharacterized protein from Methanocaldococcus jannaschii (strain ATCC 43067 / DSM 2661 / JAL-1 / JCM 10045 / NBRC 100440) (Methanococcus jannaschii).